A 745-amino-acid chain; its full sequence is Cullin-2 (745 aa).

N6-acetyllysine is present on Lys-393. Thr-661 is subject to Phosphothreonine. One can recognise a Cullin neddylation domain in the interval 675 to 735 (DRKMYLQAAI…IDKQYIERSQ (61 aa)). A Glycyl lysine isopeptide (Lys-Gly) (interchain with G-Cter in NEDD8) cross-link involves residue Lys-689.

Belongs to the cullin family. As to quaternary structure, component of multiple Cul2-RING (CRL2) E3 ubiquitin-protein ligase complexes consisting of CUL2, Elongin BC (ELOB and ELOC), RBX1 and a variable substrate-specific adapter; this complex is also known as ECS (Elongin BC-CUL2/5-SOCS-box protein) complex and may consist of CUL2 or CUL5. Component of the ECS(VHL) or CBC(VHL) complex containing CUL2, RBX1, ELOB, ELOC and VHL. Component of the ECS(MED8) complex with the probable substrate recognition component MED8. Component of multiple ECS complexes part of the DesCEND (destruction via C-end degrons) pathway, which contain either KLHDC2, KLHDC3, KLHDC10, APPBP2, FEM1A, FEM1B or FEM1C as substrate-recognition component. Component of the ECS(LRR1) complex with the substrate recognition component LRR1. Component of a CRL2(FEM1B) complex containing CUL2, RBX1, ELOB, ELOC and FEM1B. Component of a CRL2(FEM1C) complex containing CUL2, RBX1, ELOB, ELOC and FEM1C. Part of an E3 ubiquitin-protein ligase complex including ZYG11B, CUL2 and Elongin BC. Part of an E3 ubiquitin-protein ligase complex including ZER1, CUL2 and Elongin BC. Interacts with RBX1, RNF7, FEM1B and TIP120A/CAND1. Found in a complex composed of LIMD1, VHL, EGLN1/PHD2, ELOB and CUL2. Interacts (when neddylated) with ARIH1; leading to activate the E3 ligase activity of ARIH1. Interacts (unneddylated form) with DCUN1D1, DCUN1D2, DCUN1D3, DCUN1D4 and DCUN1D5; these interactions promote the cullin neddylation. Component of VCB (elongins BC/CUL2/VHL) complex that contains at least DCUN1D1, CUL2 and VHL; this complex triggers CUL2 neddylation and consequently cullin ring ligase (CRL) substrates polyubiquitylation. Post-translationally, neddylated; which enhances the ubiquitination activity of ECS (Elongin BC-CUL2/5-SOCS-box protein) E3 ubiquitin-protein ligase complexes. Neddylation leads to structural rearrangment in the complex that allows interaction between the E2 ubiquitin-conjugating enzyme and the acceptor ubiquitin. CBC(VHL) complex formation seems to promote neddylation. Deneddylated via its interaction with the COP9 signalosome (CSN) complex.

It localises to the nucleus. It functions in the pathway protein modification; protein ubiquitination. Functionally, core component of multiple cullin-RING-based ECS (ElonginB/C-CUL2/5-SOCS-box protein) E3 ubiquitin-protein ligase complexes, which mediate the ubiquitination of target proteins. CUL2 may serve as a rigid scaffold in the complex and may contribute to catalysis through positioning of the substrate and the ubiquitin-conjugating enzyme. The E3 ubiquitin-protein ligase activity of the complex is dependent on the neddylation of the cullin subunit and is inhibited by the association of the deneddylated cullin subunit with TIP120A/CAND1. The functional specificity of the ECS complex depends on the substrate recognition component. ECS(VHL) mediates the ubiquitination of hypoxia-inducible factor (HIF). A number of ECS complexes (containing either KLHDC2, KLHDC3, KLHDC10, APPBP2, FEM1A, FEM1B or FEM1C as substrate-recognition component) are part of the DesCEND (destruction via C-end degrons) pathway, which recognizes a C-degron located at the extreme C terminus of target proteins, leading to their ubiquitination and degradation. ECS complexes and ARIH1 collaborate in tandem to mediate ubiquitination of target proteins. ECS(LRR1) ubiquitinates MCM7 and promotes CMG replisome disassembly by VCP and chromatin extraction during S-phase. In Pongo abelii (Sumatran orangutan), this protein is Cullin-2 (CUL2).